Consider the following 337-residue polypeptide: ATP-dependent 6-phosphofructokinase (337 aa).

Gly11 is an ATP binding site. ADP is bound at residue 21 to 25; sequence RAVVR. Residues 72–73 and 102–105 each bind ATP; these read RY and GDGS. Asp103 is a Mg(2+) binding site. Residue 125 to 127 coordinates substrate; the sequence is TID. The active-site Proton acceptor is the Asp127. Arg154 provides a ligand contact to ADP. Substrate is bound by residues Arg162 and 169–171; that span reads MGR. Residues 185–187 and 214–216 contribute to the ADP site; these read GAD and KNH. Residues Glu223, Arg245, and 251–254 each bind substrate; that span reads HILR.

It belongs to the phosphofructokinase type A (PFKA) family. ATP-dependent PFK group I subfamily. Prokaryotic clade 'B1' sub-subfamily. As to quaternary structure, homotetramer. Mg(2+) serves as cofactor.

The protein localises to the cytoplasm. The enzyme catalyses beta-D-fructose 6-phosphate + ATP = beta-D-fructose 1,6-bisphosphate + ADP + H(+). It functions in the pathway carbohydrate degradation; glycolysis; D-glyceraldehyde 3-phosphate and glycerone phosphate from D-glucose: step 3/4. Its activity is regulated as follows. Allosterically activated by ADP and other diphosphonucleosides, and allosterically inhibited by phosphoenolpyruvate. In terms of biological role, catalyzes the phosphorylation of D-fructose 6-phosphate to fructose 1,6-bisphosphate by ATP, the first committing step of glycolysis. This Streptococcus uberis (strain ATCC BAA-854 / 0140J) protein is ATP-dependent 6-phosphofructokinase.